A 92-amino-acid chain; its full sequence is Small ribosomal subunit protein uS19 (92 aa).

Belongs to the universal ribosomal protein uS19 family.

Protein S19 forms a complex with S13 that binds strongly to the 16S ribosomal RNA. The sequence is that of Small ribosomal subunit protein uS19 from Sulfurovum sp. (strain NBC37-1).